A 235-amino-acid chain; its full sequence is Sugar fermentation stimulation protein homolog (235 aa).

This sequence belongs to the SfsA family.

The polypeptide is Sugar fermentation stimulation protein homolog (Alkaliphilus oremlandii (strain OhILAs) (Clostridium oremlandii (strain OhILAs))).